The following is a 222-amino-acid chain: Probable transaldolase (222 aa).

The Schiff-base intermediate with substrate role is filled by K91.

This sequence belongs to the transaldolase family. Type 3B subfamily.

Its subcellular location is the cytoplasm. The enzyme catalyses D-sedoheptulose 7-phosphate + D-glyceraldehyde 3-phosphate = D-erythrose 4-phosphate + beta-D-fructose 6-phosphate. Its pathway is carbohydrate degradation; pentose phosphate pathway; D-glyceraldehyde 3-phosphate and beta-D-fructose 6-phosphate from D-ribose 5-phosphate and D-xylulose 5-phosphate (non-oxidative stage): step 2/3. Transaldolase is important for the balance of metabolites in the pentose-phosphate pathway. This Pelodictyon phaeoclathratiforme (strain DSM 5477 / BU-1) protein is Probable transaldolase.